The sequence spans 381 residues: Succinyl-diaminopimelate desuccinylase (381 aa).

A Zn(2+)-binding site is contributed by H71. D73 is a catalytic residue. D104 contributes to the Zn(2+) binding site. Catalysis depends on E138, which acts as the Proton acceptor. Residues E139, E167, and H353 each coordinate Zn(2+).

Belongs to the peptidase M20A family. DapE subfamily. Homodimer. Zn(2+) serves as cofactor. It depends on Co(2+) as a cofactor.

It catalyses the reaction N-succinyl-(2S,6S)-2,6-diaminopimelate + H2O = (2S,6S)-2,6-diaminopimelate + succinate. Its pathway is amino-acid biosynthesis; L-lysine biosynthesis via DAP pathway; LL-2,6-diaminopimelate from (S)-tetrahydrodipicolinate (succinylase route): step 3/3. Catalyzes the hydrolysis of N-succinyl-L,L-diaminopimelic acid (SDAP), forming succinate and LL-2,6-diaminopimelate (DAP), an intermediate involved in the bacterial biosynthesis of lysine and meso-diaminopimelic acid, an essential component of bacterial cell walls. This is Succinyl-diaminopimelate desuccinylase from Shewanella piezotolerans (strain WP3 / JCM 13877).